The chain runs to 444 residues: Ubiquitin carboxyl-terminal hydrolase MINDY-3 (444 aa).

Cysteine 51 (nucleophile) is an active-site residue. The residue at position 124 (serine 124) is a Phosphoserine. The Proton acceptor role is filled by histidine 286.

It belongs to the MINDY deubiquitinase family. FAM188 subfamily. Interacts with COPS5.

It localises to the nucleus. It carries out the reaction Thiol-dependent hydrolysis of ester, thioester, amide, peptide and isopeptide bonds formed by the C-terminal Gly of ubiquitin (a 76-residue protein attached to proteins as an intracellular targeting signal).. Its function is as follows. Hydrolase that can remove 'Lys-48'-linked conjugated ubiquitin from proteins. This is Ubiquitin carboxyl-terminal hydrolase MINDY-3 from Mus musculus (Mouse).